A 132-amino-acid polypeptide reads, in one-letter code: Peptide methionine sulfoxide reductase MsrB (132 aa).

A MsrB domain is found at 8–130 (LDSWREELTE…NSASLKLVPR (123 aa)). Residues cysteine 47, cysteine 50, cysteine 96, and cysteine 99 each coordinate Zn(2+). Cysteine 119 serves as the catalytic Nucleophile.

It belongs to the MsrB Met sulfoxide reductase family. Zn(2+) is required as a cofactor.

The enzyme catalyses L-methionyl-[protein] + [thioredoxin]-disulfide + H2O = L-methionyl-(R)-S-oxide-[protein] + [thioredoxin]-dithiol. This chain is Peptide methionine sulfoxide reductase MsrB, found in Pseudomonas paraeruginosa (strain DSM 24068 / PA7) (Pseudomonas aeruginosa (strain PA7)).